The chain runs to 97 residues: Anti-sigma-YlaC factor YlaD (97 aa).

His-29, Cys-33, and Cys-36 together coordinate Zn(2+). Residues 71–93 form a helical membrane-spanning segment; it reads YYGLLIMKAACWFGAAVAMMLII.

This sequence belongs to the zinc-associated anti-sigma factor (ZAS) superfamily. Zn(2+) is required as a cofactor.

Its subcellular location is the cell membrane. Anti-sigma factor for YlaC. The protein is Anti-sigma-YlaC factor YlaD (ylaD) of Bacillus subtilis (strain 168).